A 175-amino-acid polypeptide reads, in one-letter code: Adenine phosphoribosyltransferase (175 aa).

Belongs to the purine/pyrimidine phosphoribosyltransferase family. Homodimer.

It localises to the cytoplasm. The enzyme catalyses AMP + diphosphate = 5-phospho-alpha-D-ribose 1-diphosphate + adenine. The protein operates within purine metabolism; AMP biosynthesis via salvage pathway; AMP from adenine: step 1/1. In terms of biological role, catalyzes a salvage reaction resulting in the formation of AMP, that is energically less costly than de novo synthesis. The protein is Adenine phosphoribosyltransferase of Lactobacillus delbrueckii subsp. bulgaricus (strain ATCC 11842 / DSM 20081 / BCRC 10696 / JCM 1002 / NBRC 13953 / NCIMB 11778 / NCTC 12712 / WDCM 00102 / Lb 14).